Consider the following 216-residue polypeptide: Splicing factor U2AF 23 kDa subunit (216 aa).

The C3H1-type 1 zinc finger occupies 12–40; sequence EQDKVNCSFYYKIGACRHGERCSRKHVKP. Residues 44–141 enclose the RRM domain; that stretch reads QTILCPNMYK…RPVYAELSPV (98 aa). The segment at 143-170 adopts a C3H1-type 2 zinc-finger fold; the sequence is DFREACCRQHETSECQRGGLCNFMHAKK. Positions 194-216 are disordered; sequence EMKKEPNSDSTNRWVSVTAERKN.

Forms a heterodimer with the U2AF large subunit. Can also form a homodimer. U2AF large subunit (U2AF59), U2AF small subunit (U2AF23) and SF1 (bpb1) interact to form a complex required for complex A formation. Interacts with cwf13.

It localises to the nucleus. Necessary for the splicing of pre-mRNA. The SF1-U2AF59-U2AF23 complex has a role in the recognition of the branch site (5'-UACUAAC-3'), the pyrimidine tract and the 3'-splice site at the 3'-end of introns. In Schizosaccharomyces pombe (strain 972 / ATCC 24843) (Fission yeast), this protein is Splicing factor U2AF 23 kDa subunit.